The primary structure comprises 546 residues: Histidine--tRNA ligase, mitochondrial (546 aa).

A mitochondrion-targeting transit peptide spans 1 to 20 (MLSRSLNKVVTSIKSSSIIR). L-histidine-binding positions include 129–131 (DLT), Arg-156, Gln-172, Asp-176, Arg-326, and 330–331 (YY).

It belongs to the class-II aminoacyl-tRNA synthetase family.

The protein localises to the cytoplasm. The protein resides in the mitochondrion. It carries out the reaction tRNA(His) + L-histidine + ATP = L-histidyl-tRNA(His) + AMP + diphosphate + H(+). Functionally, catalyzes the aminoacylation of histidyl-tRNA in both the cytoplasm and the mitochondrion. This is Histidine--tRNA ligase, mitochondrial (HTS1) from Saccharomyces cerevisiae (strain ATCC 204508 / S288c) (Baker's yeast).